Consider the following 457-residue polypeptide: Bifunctional protein GlmU (457 aa).

Residues 1 to 230 form a pyrophosphorylase region; sequence MSKRYAVVLA…FEESLGVNDR (230 aa). Residues 9-12, K23, Q73, and 78-79 contribute to the UDP-N-acetyl-alpha-D-glucosamine site; these read LAAG and GT. D103 provides a ligand contact to Mg(2+). Residues G140, E155, N170, and N228 each coordinate UDP-N-acetyl-alpha-D-glucosamine. N228 lines the Mg(2+) pocket. The segment at 231–251 is linker; the sequence is IALAEASKLMQRRINDNHMRN. The segment at 252–457 is N-acetyltransferase; that stretch reads GVTLVNPENT…DYAKRLNHGK (206 aa). R333 and K351 together coordinate UDP-N-acetyl-alpha-D-glucosamine. The Proton acceptor role is filled by H363. Y366 and N377 together coordinate UDP-N-acetyl-alpha-D-glucosamine. Residues 386–387, A423, and R440 each bind acetyl-CoA; that span reads NY.

It in the N-terminal section; belongs to the N-acetylglucosamine-1-phosphate uridyltransferase family. This sequence in the C-terminal section; belongs to the transferase hexapeptide repeat family. Homotrimer. Requires Mg(2+) as cofactor.

Its subcellular location is the cytoplasm. The enzyme catalyses alpha-D-glucosamine 1-phosphate + acetyl-CoA = N-acetyl-alpha-D-glucosamine 1-phosphate + CoA + H(+). It carries out the reaction N-acetyl-alpha-D-glucosamine 1-phosphate + UTP + H(+) = UDP-N-acetyl-alpha-D-glucosamine + diphosphate. It functions in the pathway nucleotide-sugar biosynthesis; UDP-N-acetyl-alpha-D-glucosamine biosynthesis; N-acetyl-alpha-D-glucosamine 1-phosphate from alpha-D-glucosamine 6-phosphate (route II): step 2/2. It participates in nucleotide-sugar biosynthesis; UDP-N-acetyl-alpha-D-glucosamine biosynthesis; UDP-N-acetyl-alpha-D-glucosamine from N-acetyl-alpha-D-glucosamine 1-phosphate: step 1/1. Its pathway is bacterial outer membrane biogenesis; LPS lipid A biosynthesis. Functionally, catalyzes the last two sequential reactions in the de novo biosynthetic pathway for UDP-N-acetylglucosamine (UDP-GlcNAc). The C-terminal domain catalyzes the transfer of acetyl group from acetyl coenzyme A to glucosamine-1-phosphate (GlcN-1-P) to produce N-acetylglucosamine-1-phosphate (GlcNAc-1-P), which is converted into UDP-GlcNAc by the transfer of uridine 5-monophosphate (from uridine 5-triphosphate), a reaction catalyzed by the N-terminal domain. This is Bifunctional protein GlmU from Listeria welshimeri serovar 6b (strain ATCC 35897 / DSM 20650 / CCUG 15529 / CIP 8149 / NCTC 11857 / SLCC 5334 / V8).